We begin with the raw amino-acid sequence, 168 residues long: Histone doublet miniH2B-H2A (168 aa).

Its subcellular location is the host nucleus. It is found in the host cytoplasm. The protein localises to the virion. In terms of biological role, histone-like protein that is recruited to viral factories during viral replication and participates in viral DNA packaging and virion production probably by forming unstable nucleosome-like particles. May compact the viral DNA. The protein is Histone doublet miniH2B-H2A of Melbournevirus (MelV).